Consider the following 754-residue polypeptide: Relaxin receptor 2 (754 aa).

Residues 1 to 416 lie on the Extracellular side of the membrane; the sequence is MIVFLVFKHL…SSFEDLLANN (416 aa). The 38-residue stretch at 44–81 folds into the LDL-receptor class A domain; the sequence is SCQKGYFPCGNLTKCLPRAFHCDGKDDCGNGADEENCG. Intrachain disulfides connect Cys-45–Cys-58, Cys-52–Cys-71, and Cys-65–Cys-80. An N-linked (GlcNAc...) asparagine glycan is attached at Asn-54. N-linked (GlcNAc...) asparagine glycosylation is present at Asn-138. LRR repeat units lie at residues 138–159, 162–183, 186–207, 210–231, 234–255, 258–279, 282–303, 306–327, 330–351, and 354–375; these read NVTLLSLKKNKIHSLPDKVFIK, KLKKIFLQHNCIRHISRKAFFG, NLQILYLNHNCITTLRPGIFKD, QLTWLILDDNPITRISQRLFTG, SLFFLSMVNNYLEALPKQMCAQ, QLNWVDLEGNRIKYLTNSTFLS, SLTVLFLPRNQIGFVPEKTFSS, NLGELDLSSNTITELSPHLFKD, LLQKLNLSSNPLMYLHKNQFES, and QLQSLDLERIEIPNINTRMFQP. Residue Asn-274 is glycosylated (N-linked (GlcNAc...) asparagine). The N-linked (GlcNAc...) asparagine glycan is linked to Asn-335. Residue Asn-378 is glycosylated (N-linked (GlcNAc...) asparagine). Residues 417–437 form a helical membrane-spanning segment; that stretch reads ILRIFVWVIAFITCFGNLFVI. The Cytoplasmic segment spans residues 438–455; sequence GMRSFIKAENTTHAMSIK. A helical membrane pass occupies residues 456–476; sequence ILCCADCLMGVYLFFVGIFDI. Residues 477–495 are Extracellular-facing; sequence KYRGQYQKYALLWMESVQC. Cys-495 and Cys-573 form a disulfide bridge. Residues 496–518 form a helical membrane-spanning segment; sequence RLMGFLAMLSTEVSVLLLTYLTL. The Cytoplasmic segment spans residues 519-537; the sequence is EKFLVIVFPFSNIRPGKRQ. A helical membrane pass occupies residues 538–558; sequence TSVILICIWMAGFLIAVIPFW. Residues 559-592 lie on the Extracellular side of the membrane; sequence NKDYFGNFYGKNGVCFPLYYDQTEDIGSKGYSLG. A helical membrane pass occupies residues 593 to 613; the sequence is IFLGVNLLAFLIIVFSYITMF. The Cytoplasmic segment spans residues 614–639; sequence CSIQKTALQTTEVRNCFGREVAVANR. A helical transmembrane segment spans residues 640–660; it reads FFFIVFSDAICWIPVFVVKIL. Topologically, residues 661 to 670 are extracellular; that stretch reads SLFRVEIPDT. Residues 671–691 traverse the membrane as a helical segment; it reads MTSWIVIFFLPVNSALNPILY. At 692–754 the chain is on the cytoplasmic side; that stretch reads TLTTNFFKDK…LGDSIMKPVS (63 aa).

The protein belongs to the G-protein coupled receptor 1 family. Expressed mainly in the brain, kidney, muscle, testis, thyroid, uterus, peripheral blood cells and bone marrow.

Its subcellular location is the cell membrane. Its function is as follows. Receptor for relaxin. The activity of this receptor is mediated by G proteins leading to stimulation of adenylate cyclase and an increase of cAMP. May also be a receptor for Leydig insulin-like peptide (INSL3). The chain is Relaxin receptor 2 (RXFP2) from Homo sapiens (Human).